Here is a 465-residue protein sequence, read N- to C-terminus: Glutamate--tRNA ligase 1 (465 aa).

Residues 8–18 (PSPTGNLHIGG) carry the 'HIGH' region motif. The 'KMSKS' region motif lies at 236–240 (KLSKR). ATP is bound at residue Lys-239.

The protein belongs to the class-I aminoacyl-tRNA synthetase family. Glutamate--tRNA ligase type 1 subfamily. Monomer.

Its subcellular location is the cytoplasm. It carries out the reaction tRNA(Glu) + L-glutamate + ATP = L-glutamyl-tRNA(Glu) + AMP + diphosphate. In terms of biological role, catalyzes the attachment of glutamate to tRNA(Glu) in a two-step reaction: glutamate is first activated by ATP to form Glu-AMP and then transferred to the acceptor end of tRNA(Glu). This is Glutamate--tRNA ligase 1 from Wolinella succinogenes (strain ATCC 29543 / DSM 1740 / CCUG 13145 / JCM 31913 / LMG 7466 / NCTC 11488 / FDC 602W) (Vibrio succinogenes).